The chain runs to 313 residues: Olfactory receptor 4Q3 (313 aa).

Residues 1 to 25 lie on the Extracellular side of the membrane; it reads MKKEQDSNVTEFVLLGLSSSWELQL. The N-linked (GlcNAc...) asparagine glycan is linked to Asn8. Residues 26–49 traverse the membrane as a helical segment; the sequence is FLFLLFLFFYIAIVLGNLLIVVTV. At 50-58 the chain is on the cytoplasmic side; sequence QAHAHLLQS. The helical transmembrane segment at 59-80 threads the bilayer; the sequence is PMYYFLGHLSFIDLCLSCVTVP. Topologically, residues 81 to 101 are extracellular; the sequence is KMLGDFLQQGKSISFSGCLAQ. A disulfide bridge links Cys98 with Cys190. Residues 102–121 traverse the membrane as a helical segment; the sequence is IYFLHFLGASEMFLLTVMAY. The Cytoplasmic segment spans residues 122 to 140; that stretch reads DRYVAICNPLRYLTVMNPQ. Residues 141–159 traverse the membrane as a helical segment; that stretch reads LCLWLVLACWCGGFIHSIM. At 160 to 196 the chain is on the extracellular side; it reads QVILVIQLPFCGPNELDNFYCDVPQVIKLACMDTYVV. A helical membrane pass occupies residues 197 to 220; that stretch reads EVLVIANSGLLSLVCFLVLLFSYA. The Cytoplasmic portion of the chain corresponds to 221–236; sequence IILITLRTHFCQGQNK. Residues 237-259 form a helical membrane-spanning segment; sequence VFSTCASHLTVVSLIFVPCVFIY. The Extracellular segment spans residues 260-270; that stretch reads LRPFCSFSVDK. The helical transmembrane segment at 271 to 290 threads the bilayer; it reads IFSLFYTVITPMLNPLIYTL. At 291 to 313 the chain is on the cytoplasmic side; it reads RNTDMKTAMKKLRIKPCGIPLPC.

It belongs to the G-protein coupled receptor 1 family.

It is found in the cell membrane. Functionally, odorant receptor. In Homo sapiens (Human), this protein is Olfactory receptor 4Q3 (OR4Q3).